Here is a 218-residue protein sequence, read N- to C-terminus: Probable transaldolase (218 aa).

The active-site Schiff-base intermediate with substrate is the K87.

This sequence belongs to the transaldolase family. Type 3B subfamily.

The protein resides in the cytoplasm. The enzyme catalyses D-sedoheptulose 7-phosphate + D-glyceraldehyde 3-phosphate = D-erythrose 4-phosphate + beta-D-fructose 6-phosphate. Its pathway is carbohydrate degradation; pentose phosphate pathway; D-glyceraldehyde 3-phosphate and beta-D-fructose 6-phosphate from D-ribose 5-phosphate and D-xylulose 5-phosphate (non-oxidative stage): step 2/3. Functionally, transaldolase is important for the balance of metabolites in the pentose-phosphate pathway. The sequence is that of Probable transaldolase from Bacteroides thetaiotaomicron (strain ATCC 29148 / DSM 2079 / JCM 5827 / CCUG 10774 / NCTC 10582 / VPI-5482 / E50).